Consider the following 297-residue polypeptide: Protoheme IX farnesyltransferase (297 aa).

The next 9 helical transmembrane spans lie at 16–36 (VVAL…PGVP), 45–65 (VLGF…NQLL), 93–113 (VFAS…VNLI), 114–134 (TAVL…VYLK), 141–161 (IVIG…AVTG), 172–192 (SLLV…LAIF), 223–243 (VVLA…AFYL), 244–264 (GGAI…LDPP), and 277–297 (IVYL…LPWL).

This sequence belongs to the UbiA prenyltransferase family. Protoheme IX farnesyltransferase subfamily.

It is found in the cell inner membrane. The catalysed reaction is heme b + (2E,6E)-farnesyl diphosphate + H2O = Fe(II)-heme o + diphosphate. It functions in the pathway porphyrin-containing compound metabolism; heme O biosynthesis; heme O from protoheme: step 1/1. In terms of biological role, converts heme B (protoheme IX) to heme O by substitution of the vinyl group on carbon 2 of heme B porphyrin ring with a hydroxyethyl farnesyl side group. The chain is Protoheme IX farnesyltransferase from Stenotrophomonas maltophilia (strain R551-3).